The chain runs to 64 residues: Large ribosomal subunit protein bL35 (64 aa).

This sequence belongs to the bacterial ribosomal protein bL35 family.

The chain is Large ribosomal subunit protein bL35 from Streptomyces coelicolor (strain ATCC BAA-471 / A3(2) / M145).